The chain runs to 430 residues: Trigger factor (430 aa).

The 86-residue stretch at 163-248 (GNIAIIDFKG…VKEIKVKEIP (86 aa)) folds into the PPIase FKBP-type domain.

It belongs to the FKBP-type PPIase family. Tig subfamily.

Its subcellular location is the cytoplasm. The enzyme catalyses [protein]-peptidylproline (omega=180) = [protein]-peptidylproline (omega=0). Its function is as follows. Involved in protein export. Acts as a chaperone by maintaining the newly synthesized protein in an open conformation. Functions as a peptidyl-prolyl cis-trans isomerase. The chain is Trigger factor from Clostridium kluyveri (strain NBRC 12016).